The primary structure comprises 427 residues: Serine hydroxymethyltransferase (427 aa).

Residue 122 to 124 (GHI) coordinates (6S)-5,6,7,8-tetrahydrofolate. An N6-(pyridoxal phosphate)lysine modification is found at Lys228.

It belongs to the SHMT family. In terms of assembly, homodimer. The cofactor is pyridoxal 5'-phosphate.

It localises to the cytoplasm. Its pathway is amino-acid biosynthesis; glycine biosynthesis; glycine from L-serine: step 1/1. Its function is as follows. Catalyzes the reversible interconversion of serine and glycine with a modified folate serving as the one-carbon carrier. Also exhibits a pteridine-independent aldolase activity toward beta-hydroxyamino acids, producing glycine and aldehydes, via a retro-aldol mechanism. The chain is Serine hydroxymethyltransferase from Thermococcus onnurineus (strain NA1).